Here is a 246-residue protein sequence, read N- to C-terminus: Probable transcriptional regulatory protein YebC (246 aa).

The disordered stretch occupies residues 1-20; the sequence is MAGHSKWANTRHRKAAQDAK.

It belongs to the TACO1 family.

It is found in the cytoplasm. The protein is Probable transcriptional regulatory protein YebC of Salmonella choleraesuis (strain SC-B67).